The primary structure comprises 399 residues: Probable inactive 2-oxoglutarate-dependent dioxygenase AOP2 (399 aa).

One can recognise a Fe2OG dioxygenase domain in the interval 248-345; the sequence is GGDDVEANDD…RYTAAIFTCP (98 aa). 3 residues coordinate Fe cation: H268, D270, and H325. R336 lines the 2-oxoglutarate pocket.

Belongs to the iron/ascorbate-dependent oxidoreductase family. Requires Fe(2+) as cofactor.

In Arabidopsis thaliana (Mouse-ear cress), this protein is Probable inactive 2-oxoglutarate-dependent dioxygenase AOP2 (AOP2).